The primary structure comprises 23 residues: Profilin (23 aa).

Belongs to the profilin family. Occurs in many kinds of cells as a complex with monomeric actin in a 1:1 ratio.

The protein resides in the cytoplasm. It is found in the cytoskeleton. Binds to actin and affects the structure of the cytoskeleton. At high concentrations, profilin prevents the polymerization of actin, whereas it enhances it at low concentrations. By binding to PIP2, it inhibits the formation of IP3 and DG. The chain is Profilin from Beta vulgaris (Sugar beet).